The chain runs to 149 residues: D-aminoacyl-tRNA deacylase (149 aa).

The Gly-cisPro motif, important for rejection of L-amino acids signature appears at 137–138 (GP).

Belongs to the DTD family. As to quaternary structure, homodimer.

It localises to the cytoplasm. The enzyme catalyses glycyl-tRNA(Ala) + H2O = tRNA(Ala) + glycine + H(+). It catalyses the reaction a D-aminoacyl-tRNA + H2O = a tRNA + a D-alpha-amino acid + H(+). An aminoacyl-tRNA editing enzyme that deacylates mischarged D-aminoacyl-tRNAs. Also deacylates mischarged glycyl-tRNA(Ala), protecting cells against glycine mischarging by AlaRS. Acts via tRNA-based rather than protein-based catalysis; rejects L-amino acids rather than detecting D-amino acids in the active site. By recycling D-aminoacyl-tRNA to D-amino acids and free tRNA molecules, this enzyme counteracts the toxicity associated with the formation of D-aminoacyl-tRNA entities in vivo and helps enforce protein L-homochirality. The protein is D-aminoacyl-tRNA deacylase of Anaeromyxobacter dehalogenans (strain 2CP-C).